The sequence spans 540 residues: Phosphoenolpyruvate carboxykinase (ATP) (540 aa).

Arginine 65 is a substrate binding site. Lysine 87 is modified (N6-acetyllysine). Positions 207 and 213 each coordinate substrate. ATP is bound by residues lysine 213, histidine 232, and 248 to 256 (GLSGTGKTT). Mn(2+) contacts are provided by lysine 213 and histidine 232. A Mn(2+)-binding site is contributed by aspartate 269. ATP-binding positions include glutamate 297, arginine 333, 449 to 450 (RI), and threonine 455. Residue arginine 333 participates in substrate binding. The residue at position 523 (lysine 523) is an N6-acetyllysine.

The protein belongs to the phosphoenolpyruvate carboxykinase (ATP) family. As to quaternary structure, monomer. Mn(2+) is required as a cofactor.

It localises to the cytoplasm. It catalyses the reaction oxaloacetate + ATP = phosphoenolpyruvate + ADP + CO2. It functions in the pathway carbohydrate biosynthesis; gluconeogenesis. Its function is as follows. Involved in the gluconeogenesis. Catalyzes the conversion of oxaloacetate (OAA) to phosphoenolpyruvate (PEP) through direct phosphoryl transfer between the nucleoside triphosphate and OAA. The polypeptide is Phosphoenolpyruvate carboxykinase (ATP) (Escherichia coli O157:H7).